The chain runs to 232 residues: Putative B3 domain-containing protein Os11g0242900 (232 aa).

Positions 1 to 51 (MTVELEKIAGSFFISKGWKTFVHRTGLLSGQYIRFQVLTPSKINVLLFDKK) form a DNA-binding region, TF-B3 1. Residues 92-121 (SHTSNKETSSDSRTESMTDIPSSSDNSGET) are disordered. The span at 95-107 (SNKETSSDSRTES) shows a compositional bias: basic and acidic residues. The span at 108–121 (MTDIPSSSDNSGET) shows a compositional bias: polar residues. The segment at residues 140-232 (DIKNYISIIG…PNVKITIDVL (93 aa)) is a DNA-binding region (TF-B3 2).

It is found in the nucleus. The protein is Putative B3 domain-containing protein Os11g0242900 of Oryza sativa subsp. japonica (Rice).